We begin with the raw amino-acid sequence, 125 residues long: Profilin-P (125 aa).

S2 carries the N-acetylserine modification.

This sequence belongs to the profilin family. Occurs in many kinds of cells as a complex with monomeric actin in a 1:1 ratio.

The protein localises to the cytoplasm. Its subcellular location is the cytoskeleton. Functionally, binds to actin and affects the structure of the cytoskeleton. At high concentrations, profilin prevents the polymerization of actin, whereas it enhances it at low concentrations. By binding to PIP2, it inhibits the formation of IP3 and DG. This chain is Profilin-P (PROP), found in Physarum polycephalum (Slime mold).